The following is a 173-amino-acid chain: Alpha-crystallin A chain (173 aa).

At methionine 1 the chain carries N-acetylmethionine. Residues methionine 1–glutamate 63 form a required for complex formation with BFSP1 and BFSP2 region. A Deamidated glutamine; partial modification is found at glutamine 6. Phosphoserine is present on serine 45. The residue at position 50 (glutamine 50) is a Deamidated glutamine; partial. The sHSP domain maps to leucine 52 to serine 162. Lysine 70 and lysine 99 each carry N6-acetyllysine. A Zn(2+)-binding site is contributed by histidine 100. Residue asparagine 101 is modified to Deamidated asparagine; partial. 2 residues coordinate Zn(2+): glutamate 102 and histidine 107. Serine 122 bears the Phosphoserine mark. A Deamidated asparagine; partial modification is found at asparagine 123. The segment at proline 144–serine 173 is disordered. A compositionally biased stretch (basic and acidic residues) spans glycine 153–proline 167. Histidine 154 serves as a coordination point for Zn(2+). O-linked (GlcNAc) serine glycosylation is present at serine 162.

It belongs to the small heat shock protein (HSP20) family. Heteromer composed of three CRYAA and one CRYAB subunits. Inter-subunit bridging via zinc ions enhances stability, which is crucial as there is no protein turn over in the lens. Can also form homodimers and homotetramers (dimers of dimers) which serve as the building blocks of homooligomers. Within homooligomers, the zinc-binding motif is created from residues of 3 different molecules. His-100 and Glu-102 from one molecule are ligands of the zinc ion, and His-107 and His-154 residues from additional molecules complete the site with tetrahedral coordination geometry. Part of a complex required for lens intermediate filament formation composed of BFSP1, BFSP2 and CRYAA. In terms of processing, acetylation at Lys-70 may increase chaperone activity. Undergoes age-dependent proteolytical cleavage at the C-terminus.

The protein localises to the cytoplasm. It localises to the nucleus. Contributes to the transparency and refractive index of the lens. Acts as a chaperone, preventing aggregation of various proteins under a wide range of stress conditions. Required for the correct formation of lens intermediate filaments as part of a complex composed of BFSP1, BFSP2 and CRYAA. The sequence is that of Alpha-crystallin A chain (CRYAA) from Neovison vison (American mink).